Consider the following 215-residue polypeptide: Ribose-5-phosphate isomerase A (215 aa).

Residues 26–29 (TGST), 79–82 (DGAD), and 92–95 (KGGG) contribute to the substrate site. Glu101 serves as the catalytic Proton acceptor. Residue Lys119 coordinates substrate.

Belongs to the ribose 5-phosphate isomerase family. In terms of assembly, homodimer.

The enzyme catalyses aldehydo-D-ribose 5-phosphate = D-ribulose 5-phosphate. It participates in carbohydrate degradation; pentose phosphate pathway; D-ribose 5-phosphate from D-ribulose 5-phosphate (non-oxidative stage): step 1/1. Its function is as follows. Catalyzes the reversible conversion of ribose-5-phosphate to ribulose 5-phosphate. This chain is Ribose-5-phosphate isomerase A, found in Xanthomonas oryzae pv. oryzae (strain MAFF 311018).